The primary structure comprises 89 residues: Small ribosomal subunit protein uS15 (89 aa).

Belongs to the universal ribosomal protein uS15 family. In terms of assembly, part of the 30S ribosomal subunit. Forms a bridge to the 50S subunit in the 70S ribosome, contacting the 23S rRNA.

In terms of biological role, one of the primary rRNA binding proteins, it binds directly to 16S rRNA where it helps nucleate assembly of the platform of the 30S subunit by binding and bridging several RNA helices of the 16S rRNA. Forms an intersubunit bridge (bridge B4) with the 23S rRNA of the 50S subunit in the ribosome. The chain is Small ribosomal subunit protein uS15 from Burkholderia ambifaria (strain MC40-6).